The primary structure comprises 134 residues: Small ribosomal subunit protein uS11 (134 aa).

It belongs to the universal ribosomal protein uS11 family. Part of the 30S ribosomal subunit. Interacts with proteins S7 and S18. Binds to IF-3.

Functionally, located on the platform of the 30S subunit, it bridges several disparate RNA helices of the 16S rRNA. Forms part of the Shine-Dalgarno cleft in the 70S ribosome. The sequence is that of Small ribosomal subunit protein uS11 from Corynebacterium diphtheriae (strain ATCC 700971 / NCTC 13129 / Biotype gravis).